The sequence spans 399 residues: Adenylate cyclase (399 aa).

The segment covering 1–10 has biased composition (polar residues); that stretch reads MTVGDTTSGS. Residues 1–35 are disordered; it reads MTVGDTTSGSGEEPAADSSVHATPHHEVDHTVEPT. Residues 24 to 33 show a composition bias toward basic and acidic residues; the sequence is PHHEVDHTVE. Positions 198–307 constitute a Guanylate cyclase domain; that stretch reads RVRFADLVGF…TTVNLASRLT (110 aa). Residues aspartate 203 and aspartate 247 each contribute to the Mg(2+) site.

Belongs to the adenylyl cyclase class-3 family. The cofactor is Mg(2+).

The catalysed reaction is ATP = 3',5'-cyclic AMP + diphosphate. This chain is Adenylate cyclase (cya), found in Streptomyces griseus.